A 593-amino-acid polypeptide reads, in one-letter code: MRDSTGAGNSLVHKRSPLRRNQKTSASLNKLSLQDGHKAKKPACKFEEGQDVLARWSDGLFYLGTIKKINILKQSCFIIFEDSSKSWVLWKDIQTGATGSGEMVCTICQEEYSEAPNEMVICDKCGQGYHQLCHTPHIDSSVIDSDEKWLCRQCVFATTTKRGGALKKGPNAKALQVMKQTLPYSVADLEWDAGHKTNVQQCYCYCGGPGDWYLKMLQCCKCKQWFHEACVQCLQKPMLFGDRFYTFICSVCSSGPEYLKRLPLQWVDIAHLCLYNLSVIHKKKYFDSELELMTYINENWDRLHPGELADTPKSERYEHVLEALNDYKTMFMSGKEIKKKKHLFGLRIRVPPVPPNVAFKAEKEPEGTSHEFKIKGRKASKPTSDSREVSNGIEKKGKKKSVGRPPGPYTRKMIQKTAELPLDKESVSENPTLDLPCSIGRTEGIAHSSNTSDVDLTGASSANETTSASISRHCGLSDSRKRTRTGRSWPAAIPHLRRRRGRLPRRALQTQNSEVVKDDEGKEDYQFEELNTEILNNLADQELQLNHLKNSITSYFGAAGRIACGEKYRVLARRVTLDGKVQYLVEWEGATAS.

The interval Met-1–Thr-24 is disordered. Basic residues predominate over residues Val-12–Gln-22. Phosphothreonine is present on Thr-24. Positions Cys-44–Gly-101 constitute a Tudor domain. PHD-type zinc fingers lie at residues Glu-102–Ala-157 and Gln-201–Gly-255. Disordered stretches follow at residues Val-357–Thr-410 and Gly-444–Gly-486. Lys-360 is covalently cross-linked (Glycyl lysine isopeptide (Lys-Gly) (interchain with G-Cter in SUMO2)). Basic and acidic residues predominate over residues Lys-360 to Ile-374. A compositionally biased stretch (polar residues) spans His-447–Ile-470. Ser-452 is subject to Phosphoserine. Residue Lys-522 forms a Glycyl lysine isopeptide (Lys-Gly) (interchain with G-Cter in SUMO2) linkage.

This sequence belongs to the Polycomblike family. In terms of assembly, associates with the PRC2 complex, which consists of the core components EED, EZH1 or EZH2, SUZ12, and RBBP4, and various combinations of accessory subunits including AEBP2, JARID2, PHF19, MTF2 and EPOP. Forms a dimeric PRC2.1 (class 1, PRC-PCL) complex consisting of at least SUZ12, RBBP4, and PHF19 or MTF2; PHF19 and MTF2 stabilize the dimeric structure which enhances PRC2 interaction with chromatin.

It localises to the nucleus. In terms of biological role, polycomb group (PcG) protein that specifically binds histone H3 trimethylated at 'Lys-36' (H3K36me3) and recruits the PRC2 complex, thus enhancing PRC2 H3K27me3 methylation activity. Regulates the transcriptional networks during embryonic stem cell self-renewal and differentiation. Promotes recruitment of the PRC2 complex to the inactive X chromosome in differentiating XX ES cells and PRC2 recruitment to target genes in undifferentiated ES cells. Required to repress Hox genes by enhancing H3K27me3 methylation of the PRC2 complex. In some conditions may act as an inhibitor of PRC2 activity: able to activate the CDKN2A gene and promote cellular senescence by suppressing the catalytic activity of the PRC2 complex locally. Binds to the metal-regulating-element (MRE) of MT1A gene promoter. The chain is Metal-response element-binding transcription factor 2 (Mtf2) from Mus musculus (Mouse).